The chain runs to 453 residues: UDP-glucose 6-dehydrogenase (453 aa).

NAD(+) contacts are provided by residues 2–19 (RLCV…AACF), Val-11, Thr-121, and Glu-158. Substrate is bound by residues 154–158 (EFLKE), Lys-210, Asn-214, 255–259 (FIYAG), and Gly-263. Cys-266 acts as the Nucleophile in catalysis. An NAD(+)-binding site is contributed by Lys-269. Lys-327 lines the substrate pocket. Arg-334 contributes to the NAD(+) binding site.

The protein belongs to the UDP-glucose/GDP-mannose dehydrogenase family.

The catalysed reaction is UDP-alpha-D-glucose + 2 NAD(+) + H2O = UDP-alpha-D-glucuronate + 2 NADH + 3 H(+). The protein operates within nucleotide-sugar biosynthesis; UDP-alpha-D-glucuronate biosynthesis; UDP-alpha-D-glucuronate from UDP-alpha-D-glucose: step 1/1. It participates in bacterial outer membrane biogenesis; lipopolysaccharide biosynthesis. This chain is UDP-glucose 6-dehydrogenase (udg), found in Pseudomonas aeruginosa (strain ATCC 15692 / DSM 22644 / CIP 104116 / JCM 14847 / LMG 12228 / 1C / PRS 101 / PAO1).